The sequence spans 253 residues: Imidazole glycerol phosphate synthase subunit HisF (253 aa).

Catalysis depends on residues Asp11 and Asp130.

Belongs to the HisA/HisF family. As to quaternary structure, heterodimer of HisH and HisF.

The protein resides in the cytoplasm. The catalysed reaction is 5-[(5-phospho-1-deoxy-D-ribulos-1-ylimino)methylamino]-1-(5-phospho-beta-D-ribosyl)imidazole-4-carboxamide + L-glutamine = D-erythro-1-(imidazol-4-yl)glycerol 3-phosphate + 5-amino-1-(5-phospho-beta-D-ribosyl)imidazole-4-carboxamide + L-glutamate + H(+). Its pathway is amino-acid biosynthesis; L-histidine biosynthesis; L-histidine from 5-phospho-alpha-D-ribose 1-diphosphate: step 5/9. In terms of biological role, IGPS catalyzes the conversion of PRFAR and glutamine to IGP, AICAR and glutamate. The HisF subunit catalyzes the cyclization activity that produces IGP and AICAR from PRFAR using the ammonia provided by the HisH subunit. In Cereibacter sphaeroides (strain KD131 / KCTC 12085) (Rhodobacter sphaeroides), this protein is Imidazole glycerol phosphate synthase subunit HisF.